Reading from the N-terminus, the 156-residue chain is Arginine repressor (156 aa).

This sequence belongs to the ArgR family.

Its subcellular location is the cytoplasm. It functions in the pathway amino-acid biosynthesis; L-arginine biosynthesis [regulation]. In terms of biological role, regulates arginine biosynthesis genes. The protein is Arginine repressor of Sodalis glossinidius (strain morsitans).